Consider the following 415-residue polypeptide: Protein CDC73 homolog (415 aa).

Belongs to the CDC73 family. Component of the nuclear PAF1 complex (PAF1C), which consists of VIP2/ELF7/PAF1, VIP3/SKI8/WDR61, VIP4/LEO1, VIP5/RTF1, VIP6/ELF8/CTR9 and CDC73. Expressed in root tips, shoot apex, young leaves and flowers, especially in stamen filaments and carpels.

Its subcellular location is the nucleus. Component of the PAF1 complex (PAF1C) which is involved in histone modifications such as methylation on histone H3 'Lys-4' (H3K4me3). Involved in regulation of flowering time. Required for the expression of the flowering repressors FLC and MADS-box genes of the MAF family. Required for histone H3 trimethylation on 'Lys-4' (H3K4me3) at the FLC locus. Prevents trimethylation on 'Lys-27' (H3K27me3) at the same locus. This Arabidopsis thaliana (Mouse-ear cress) protein is Protein CDC73 homolog.